Reading from the N-terminus, the 416-residue chain is Adenylosuccinate synthetase (416 aa).

GTP-binding positions include 13–19 (GDEGKGK) and 41–43 (GHT). Asp-14 acts as the Proton acceptor in catalysis. Residues Asp-14 and Gly-41 each contribute to the Mg(2+) site. Residues 14-17 (DEGK), 39-42 (NAGH), Thr-126, Arg-140, Gln-220, Thr-235, and Arg-299 contribute to the IMP site. The Proton donor role is filled by His-42. 295 to 301 (VSTGRKR) is a substrate binding site. GTP is bound by residues Arg-301, 327–329 (KLD), and 405–407 (STS).

Belongs to the adenylosuccinate synthetase family. As to quaternary structure, homodimer. Mg(2+) serves as cofactor.

Its subcellular location is the cytoplasm. It carries out the reaction IMP + L-aspartate + GTP = N(6)-(1,2-dicarboxyethyl)-AMP + GDP + phosphate + 2 H(+). The protein operates within purine metabolism; AMP biosynthesis via de novo pathway; AMP from IMP: step 1/2. In terms of biological role, plays an important role in the de novo pathway of purine nucleotide biosynthesis. Catalyzes the first committed step in the biosynthesis of AMP from IMP. The sequence is that of Adenylosuccinate synthetase from Campylobacter jejuni subsp. jejuni serotype O:23/36 (strain 81-176).